A 317-amino-acid chain; its full sequence is Aquaporin-2 (317 aa).

The Cytoplasmic portion of the chain corresponds to 1–75; the sequence is MSLRDDLTIN…RSQEFKMQHR (75 aa). The chain crosses the membrane as a helical span at residues 76–96; it reads EFLAEFIGTLILVLLTCGFCA. The Extracellular portion of the chain corresponds to 97 to 108; that stretch reads EQTLNIEKSKSW. Residues 109–129 form a helical membrane-spanning segment; it reads LTSSLGSGLSVLIGICVAGHV. Over 130–154 the chain is Cytoplasmic; that stretch reads SGGHLNPAITIAFWVFSGFPIRKVP. The short motif at 135–137 is the NPA 1 element; that stretch reads NPA. A helical membrane pass occupies residues 155–175; it reads MYITAQLLGAFSGAALLYSIV. Topologically, residues 176 to 208 are extracellular; sequence EPAISQFDHGKRQILGELGTAGIFGTYPPLYVG. A helical transmembrane segment spans residues 209–229; that stretch reads TGSAVASEVVGTAMLLLVVMV. Topologically, residues 230–242 are cytoplasmic; sequence TGHPNNLPFRTAQ. The helical transmembrane segment at 243 to 263 threads the bilayer; the sequence is GAMIALGVTTISLCIGYTSGF. The Extracellular portion of the chain corresponds to 264–295; sequence SLNPARDFGPRLFTAVAGWGIDVFTVHHYYAL. The NPA 2 motif lies at 266–268; that stretch reads NPA. A helical membrane pass occupies residues 296–316; it reads VPMFAPILGGLAGGFIYTVFI. A topological domain (cytoplasmic) is located at residue Asp317.

It belongs to the MIP/aquaporin (TC 1.A.8) family.

It is found in the cell membrane. It catalyses the reaction H2O(in) = H2O(out). The enzyme catalyses glycerol(in) = glycerol(out). Functionally, water channel required to facilitate the transport of water across membranes. Contributes to water uptake of spores during the early stages of spore germination. Aquaporins AQP1 and AQP2 act as extracellular pH sensors and enable the spores to hydrate under favorable conditions and to commence germination. Wounded vegetables and fruit present acidic pH, so the optimal pH range for germination is adapted to the relevant host pH. The protein is Aquaporin-2 of Rhizopus delemar (strain RA 99-880 / ATCC MYA-4621 / FGSC 9543 / NRRL 43880) (Mucormycosis agent).